Reading from the N-terminus, the 85-residue chain is Small ribosomal subunit protein eS21 (85 aa).

The protein belongs to the eukaryotic ribosomal protein eS21 family. As to quaternary structure, component of the 40S small ribosomal subunit.

It localises to the cytoplasm. The protein localises to the cytosol. The protein resides in the rough endoplasmic reticulum. The protein is Small ribosomal subunit protein eS21 (RPS21) of Branchiostoma belcheri (Amphioxus).